The primary structure comprises 106 residues: Envelope small membrane protein (106 aa).

Residues 1–11 are Virion surface-facing; sequence MMNLLNTSLEE. The chain crosses the membrane as a helical span at residues 12-32; it reads NGSFLTALYVICEFVALYLLG. Residues 33–106 are Intravirion-facing; the sequence is RALQAFVQAA…ANFQNGKLHT (74 aa).

This sequence belongs to the gammacoronaviruses E protein family. In terms of assembly, homooligomer. Interacts with the M membrane protein in the budding compartment of the host cell, which is located between endoplasmic reticulum and the Golgi complex. The cytoplasmic tails of both proteins are important for this function. Interacts with Nucleoprotein.

It localises to the host Golgi apparatus membrane. In terms of biological role, plays a central role in virus morphogenesis and assembly. Acts as a viroporin and self-assembles in host membranes forming pentameric protein-lipid pores that allow ion transport. Also plays a role in the induction of apoptosis. This is Envelope small membrane protein from Gallus gallus (Chicken).